We begin with the raw amino-acid sequence, 198 residues long: MLYPTPIAKLIDSFSKLPGIGIKTATRLAFYTIGMSDDDVNEFAKNLLAAKRELSYCSICGNLTDEDPCAICRDESRDQSTILIVEDSRDVSAMENIQEYHGLYHVLHGLISPMNGVGPDDINLKSLITRLMDSEVSEVIVATNATADGEATSMYISRVLKPAGIKVTRLARGLAVGSDIEYADEVTLIRAIENRTEL.

The C4-type zinc finger occupies Cys-57 to Cys-72. Positions Ser-80–Ala-175 constitute a Toprim domain.

It belongs to the RecR family.

Functionally, may play a role in DNA repair. It seems to be involved in an RecBC-independent recombinational process of DNA repair. It may act with RecF and RecO. The chain is Recombination protein RecR from Streptococcus gordonii (strain Challis / ATCC 35105 / BCRC 15272 / CH1 / DL1 / V288).